Reading from the N-terminus, the 213-residue chain is Orotate phosphoribosyltransferase (213 aa).

5-phospho-alpha-D-ribose 1-diphosphate is bound at residue lysine 26. Phenylalanine 34–phenylalanine 35 provides a ligand contact to orotate. 5-phospho-alpha-D-ribose 1-diphosphate is bound by residues tyrosine 72–lysine 73, arginine 99, lysine 100, lysine 103, histidine 105, and aspartate 124–alanine 132. 2 residues coordinate orotate: threonine 128 and arginine 156.

This sequence belongs to the purine/pyrimidine phosphoribosyltransferase family. PyrE subfamily. As to quaternary structure, homodimer. The cofactor is Mg(2+).

It carries out the reaction orotidine 5'-phosphate + diphosphate = orotate + 5-phospho-alpha-D-ribose 1-diphosphate. It participates in pyrimidine metabolism; UMP biosynthesis via de novo pathway; UMP from orotate: step 1/2. Its function is as follows. Catalyzes the transfer of a ribosyl phosphate group from 5-phosphoribose 1-diphosphate to orotate, leading to the formation of orotidine monophosphate (OMP). The sequence is that of Orotate phosphoribosyltransferase from Pseudomonas syringae pv. tomato (strain ATCC BAA-871 / DC3000).